Reading from the N-terminus, the 358-residue chain is 3-ketosteroid-9-alpha-monooxygenase, ferredoxin reductase component (358 aa).

In terms of domain architecture, FAD-binding FR-type spans 12 to 124 (DHVLELQIAE…LAPSGNFVPT (113 aa)). Positions 269-358 (ATAVVELDGQ…SDSVEVTYDE (90 aa)) constitute a 2Fe-2S ferredoxin-type domain. Residues Cys305, Cys310, Cys313, and Cys343 each coordinate [2Fe-2S] cluster.

Monomer. The two-component system 3-ketosteroid-9-alpha-monooxygenase is composed of an oxygenase component KshA and a reductase component KshB. FAD serves as cofactor. The cofactor is [2Fe-2S] cluster.

It catalyses the reaction androsta-1,4-diene-3,17-dione + 2 reduced [2Fe-2S]-[ferredoxin] + O2 + 2 H(+) = 9alpha-hydroxyandrosta-1,4-diene-3,17-dione + 2 oxidized [2Fe-2S]-[ferredoxin] + H2O. It functions in the pathway lipid metabolism; steroid biosynthesis. Functionally, involved in the degradation of cholesterol. Catalyzes the introduction of a 9a-hydroxyl moiety into 1,4-androstadiene-3,17-dione (ADD) to yield the 9alpha-hydroxy-1,4-androstadiene-3,17-dione (9OHADD) intermediate which spontaneously form 3-hydroxy-9,10-seconandrost-1,3,5(10)-triene-9,17-dione (HSA) via the meta-cleavage of ring B with concomitant aromatization of ring A. This chain is 3-ketosteroid-9-alpha-monooxygenase, ferredoxin reductase component (hmp), found in Mycobacterium tuberculosis (strain CDC 1551 / Oshkosh).